The sequence spans 128 residues: Small ribosomal subunit protein uS11 (128 aa).

It belongs to the universal ribosomal protein uS11 family. Part of the 30S ribosomal subunit. Interacts with proteins S7 and S18. Binds to IF-3.

In terms of biological role, located on the platform of the 30S subunit, it bridges several disparate RNA helices of the 16S rRNA. Forms part of the Shine-Dalgarno cleft in the 70S ribosome. The sequence is that of Small ribosomal subunit protein uS11 from Phytoplasma australiense.